Here is a 236-residue protein sequence, read N- to C-terminus: Ubiquinone biosynthesis O-methyltransferase (236 aa).

S-adenosyl-L-methionine-binding residues include arginine 39, glycine 59, aspartate 80, and methionine 124.

This sequence belongs to the methyltransferase superfamily. UbiG/COQ3 family.

The catalysed reaction is a 3-demethylubiquinol + S-adenosyl-L-methionine = a ubiquinol + S-adenosyl-L-homocysteine + H(+). It carries out the reaction a 3-(all-trans-polyprenyl)benzene-1,2-diol + S-adenosyl-L-methionine = a 2-methoxy-6-(all-trans-polyprenyl)phenol + S-adenosyl-L-homocysteine + H(+). The protein operates within cofactor biosynthesis; ubiquinone biosynthesis. Functionally, O-methyltransferase that catalyzes the 2 O-methylation steps in the ubiquinone biosynthetic pathway. This chain is Ubiquinone biosynthesis O-methyltransferase, found in Shewanella sp. (strain W3-18-1).